Consider the following 137-residue polypeptide: uncharacterized protein (137 aa).

The interval 116 to 137 is disordered; the sequence is ARPPRGSGGTRTARNGARTASE. Positions 125-137 are enriched in polar residues; sequence TRTARNGARTASE.

This is an uncharacterized protein from Mycobacterium bovis (strain ATCC BAA-935 / AF2122/97).